We begin with the raw amino-acid sequence, 309 residues long: F-box/LRR-repeat protein At3g48880 (309 aa).

The F-box domain maps to 10-57 (LRRWEELDTDILVRIFQKFSVFELTSGLAHVCRGWRAACCDPILWKTV). LRR repeat units follow at residues 77–107 (VERR…IFHF), 108–133 (NLFL…VLPA), 159–184 (SIAN…KIMG), and 208–233 (CSAI…NISH).

The polypeptide is F-box/LRR-repeat protein At3g48880 (Arabidopsis thaliana (Mouse-ear cress)).